An 893-amino-acid polypeptide reads, in one-letter code: Translation initiation factor IF-2 (893 aa).

The disordered stretch occupies residues 1-266; sequence MVDTKNPGDK…AKPAPSKQRG (266 aa). Positions 59 to 70 are enriched in low complexity; sequence PADAPTAAAAAP. Over residues 71–92 the composition is skewed to pro residues; it reads APAPAPVPSAAPRPAAPPPPSR. Low complexity predominate over residues 93–104; the sequence is PQQSRSQSPSRS. Basic and acidic residues-rich tracts occupy residues 128–148 and 155–196; these read ARVR…RRNS and AERE…EAKR. Residues 197-226 show a composition bias toward low complexity; that stretch reads PAAAATPAKSATPAARPTGAPAVRAPGVAA. Positions 389-560 constitute a tr-type G domain; that stretch reads PRSPVVTVMG…ALQAELLDLK (172 aa). Residues 398–405 form a G1 region; that stretch reads GHVDHGKT. 398–405 provides a ligand contact to GTP; that stretch reads GHVDHGKT. Residues 423-427 form a G2 region; sequence GITQH. The G3 stretch occupies residues 446-449; sequence DTPG. Residues 446-450 and 500-503 each bind GTP; these read DTPGH and NKID. The segment at 500-503 is G4; the sequence is NKID. The tract at residues 536–538 is G5; it reads SAK.

It belongs to the TRAFAC class translation factor GTPase superfamily. Classic translation factor GTPase family. IF-2 subfamily.

It localises to the cytoplasm. One of the essential components for the initiation of protein synthesis. Protects formylmethionyl-tRNA from spontaneous hydrolysis and promotes its binding to the 30S ribosomal subunits. Also involved in the hydrolysis of GTP during the formation of the 70S ribosomal complex. The chain is Translation initiation factor IF-2 from Rhodopseudomonas palustris (strain BisA53).